Consider the following 422-residue polypeptide: Aminopentol aminotransferase (422 aa).

N6-(pyridoxal phosphate)lysine is present on Lys-258.

The protein belongs to the class-III pyridoxal-phosphate-dependent aminotransferase family. Requires pyridoxal 5'-phosphate as cofactor.

Its subcellular location is the cytoplasm. The catalysed reaction is (2S,3S,5R,10R,12S,14S,15R,16R)-2-amino-12,16-dimethylicosane-3,5,10,14,15-pentol + pyruvate = (3S,5R,10R,12S,14S,15R,16R)-3,5,10,14,15-pentahydroxy-12,16-dimethylicosan-2-one + L-alanine. Involved in degradation of fumonisin B1. Catalyzes the deamination of aminopentol (HFB1) to 2-keto-HFB1. Pyruvate is the preferred cosubstrate, but it can also use several other alpha-keto acids as amino group acceptors. This chain is Aminopentol aminotransferase (fumI), found in Sphingopyxis macrogoltabida (Sphingomonas macrogoltabidus).